The chain runs to 233 residues: Small ribosomal subunit protein uS7m (233 aa).

The transit peptide at 1–28 directs the protein to the mitochondrion; the sequence is MAAPTGKLLVHRIRAGLTCLTQVRWSRY.

The protein belongs to the universal ribosomal protein uS7 family. Component of the mitochondrial ribosome small subunit (28S) which comprises a 12S rRNA and about 30 distinct proteins.

It is found in the mitochondrion. The protein is Small ribosomal subunit protein uS7m (mrps7) of Xenopus laevis (African clawed frog).